Here is a 259-residue protein sequence, read N- to C-terminus: 3-deoxy-manno-octulosonate cytidylyltransferase (259 aa).

This sequence belongs to the KdsB family.

It is found in the cytoplasm. It catalyses the reaction 3-deoxy-alpha-D-manno-oct-2-ulosonate + CTP = CMP-3-deoxy-beta-D-manno-octulosonate + diphosphate. It functions in the pathway nucleotide-sugar biosynthesis; CMP-3-deoxy-D-manno-octulosonate biosynthesis; CMP-3-deoxy-D-manno-octulosonate from 3-deoxy-D-manno-octulosonate and CTP: step 1/1. Its pathway is bacterial outer membrane biogenesis; lipopolysaccharide biosynthesis. In terms of biological role, activates KDO (a required 8-carbon sugar) for incorporation into bacterial lipopolysaccharide in Gram-negative bacteria. This chain is 3-deoxy-manno-octulosonate cytidylyltransferase, found in Xanthomonas euvesicatoria pv. vesicatoria (strain 85-10) (Xanthomonas campestris pv. vesicatoria).